Reading from the N-terminus, the 261-residue chain is Triosephosphate isomerase (261 aa).

10–12 (NWK) provides a ligand contact to substrate. Catalysis depends on His100, which acts as the Electrophile. The Proton acceptor role is filled by Glu172. Substrate-binding positions include Gly178, Ser218, and 239-240 (GG).

This sequence belongs to the triosephosphate isomerase family. As to quaternary structure, homodimer.

The protein resides in the cytoplasm. It carries out the reaction D-glyceraldehyde 3-phosphate = dihydroxyacetone phosphate. It participates in carbohydrate biosynthesis; gluconeogenesis. The protein operates within carbohydrate degradation; glycolysis; D-glyceraldehyde 3-phosphate from glycerone phosphate: step 1/1. In terms of biological role, involved in the gluconeogenesis. Catalyzes stereospecifically the conversion of dihydroxyacetone phosphate (DHAP) to D-glyceraldehyde-3-phosphate (G3P). The chain is Triosephosphate isomerase from Nocardia farcinica (strain IFM 10152).